The primary structure comprises 177 residues: Peptidyl-tRNA hydrolase (177 aa).

Residue tyrosine 18 coordinates tRNA. Residue histidine 23 is the Proton acceptor of the active site. Phenylalanine 65, asparagine 67, and asparagine 113 together coordinate tRNA.

The protein belongs to the PTH family. In terms of assembly, monomer.

The protein resides in the cytoplasm. The catalysed reaction is an N-acyl-L-alpha-aminoacyl-tRNA + H2O = an N-acyl-L-amino acid + a tRNA + H(+). Its function is as follows. Hydrolyzes ribosome-free peptidyl-tRNAs (with 1 or more amino acids incorporated), which drop off the ribosome during protein synthesis, or as a result of ribosome stalling. In terms of biological role, catalyzes the release of premature peptidyl moieties from peptidyl-tRNA molecules trapped in stalled 50S ribosomal subunits, and thus maintains levels of free tRNAs and 50S ribosomes. The polypeptide is Peptidyl-tRNA hydrolase (Corynebacterium efficiens (strain DSM 44549 / YS-314 / AJ 12310 / JCM 11189 / NBRC 100395)).